Consider the following 178-residue polypeptide: Large ribosomal subunit protein uL6 (178 aa).

Belongs to the universal ribosomal protein uL6 family. Part of the 50S ribosomal subunit.

Functionally, this protein binds to the 23S rRNA, and is important in its secondary structure. It is located near the subunit interface in the base of the L7/L12 stalk, and near the tRNA binding site of the peptidyltransferase center. This chain is Large ribosomal subunit protein uL6, found in Francisella tularensis subsp. novicida (strain U112).